The primary structure comprises 356 residues: Vacuolar protein sorting-associated protein 26 (356 aa).

The interval methionine 301–serine 356 is disordered. Residues threonine 315–phenylalanine 324 show a composition bias toward polar residues. Basic and acidic residues predominate over residues glutamate 331–proline 342.

This sequence belongs to the VPS26 family.

May play a role in vesicular protein sorting, similar to the yeast retromer proteins. This is Vacuolar protein sorting-associated protein 26 (vps-26) from Caenorhabditis elegans.